The chain runs to 168 residues: MLTVSLLVCAMMALTQADHDGVLKGTATEAGEVSPVFRSRRALVCPAGWTLHGQRCFYSEATAMTWDLAEANCVNKGGHLASIHSLEEQLYIKDIVAGIVWIGGSACKVAGAWSWTDGTPVDYRTWCPTKPNDILSDCCMQMTAAVDKCWDDLPCPASHASICAKAAI.

The signal sequence occupies residues 1-17; the sequence is MLTVSLLVCAMMALTQA. Positions 18–34 are excised as a propeptide; sequence DHDGVLKGTATEAGEVS. 5 cysteine pairs are disulfide-bonded: Cys-45/Cys-56, Cys-73/Cys-163, Cys-107/Cys-138, Cys-127/Cys-149, and Cys-139/Cys-155. The C-type lectin domain maps to 52 to 164; that stretch reads HGQRCFYSEA…CPASHASICA (113 aa).

It is found in the secreted. Its function is as follows. Has antifreeze activity to protect fish blood from freezing at subzero sea water temperatures. Binds to ice crystals and inhibits their growth. The thermal hysteresis (TH) activity, the ability to lower the blood freezing point, is approximately 0.45 degrees Celsius at 0.15 mM for this protein. The polypeptide is Type-2 ice-structuring protein (Brachyopsis segaliensis (Sea poacher)).